A 515-amino-acid polypeptide reads, in one-letter code: Bifunctional purine biosynthesis protein PurH (515 aa).

The region spanning 1-145 (MTKRALISVS…KNHASVTVVV (145 aa)) is the MGS-like domain.

It belongs to the PurH family.

The catalysed reaction is (6R)-10-formyltetrahydrofolate + 5-amino-1-(5-phospho-beta-D-ribosyl)imidazole-4-carboxamide = 5-formamido-1-(5-phospho-D-ribosyl)imidazole-4-carboxamide + (6S)-5,6,7,8-tetrahydrofolate. It carries out the reaction IMP + H2O = 5-formamido-1-(5-phospho-D-ribosyl)imidazole-4-carboxamide. It participates in purine metabolism; IMP biosynthesis via de novo pathway; 5-formamido-1-(5-phospho-D-ribosyl)imidazole-4-carboxamide from 5-amino-1-(5-phospho-D-ribosyl)imidazole-4-carboxamide (10-formyl THF route): step 1/1. The protein operates within purine metabolism; IMP biosynthesis via de novo pathway; IMP from 5-formamido-1-(5-phospho-D-ribosyl)imidazole-4-carboxamide: step 1/1. The polypeptide is Bifunctional purine biosynthesis protein PurH (Streptococcus suis (strain 98HAH33)).